The sequence spans 77 residues: RNA-binding protein Hfq (77 aa).

The 61-residue stretch at 10-70 folds into the Sm domain; that stretch reads DAFLNHVRKA…ISTIMPGQPI (61 aa).

Belongs to the Hfq family. As to quaternary structure, homohexamer.

RNA chaperone that binds small regulatory RNA (sRNAs) and mRNAs to facilitate mRNA translational regulation in response to envelope stress, environmental stress and changes in metabolite concentrations. Also binds with high specificity to tRNAs. The protein is RNA-binding protein Hfq of Cereibacter sphaeroides (strain ATCC 17029 / ATH 2.4.9) (Rhodobacter sphaeroides).